Consider the following 138-residue polypeptide: Holo-[acyl-carrier-protein] synthase (138 aa).

The Mg(2+) site is built by aspartate 8 and glutamate 60.

It belongs to the P-Pant transferase superfamily. AcpS family. Mg(2+) serves as cofactor.

The protein resides in the cytoplasm. It catalyses the reaction apo-[ACP] + CoA = holo-[ACP] + adenosine 3',5'-bisphosphate + H(+). In terms of biological role, transfers the 4'-phosphopantetheine moiety from coenzyme A to a Ser of acyl-carrier-protein. This is Holo-[acyl-carrier-protein] synthase from Magnetococcus marinus (strain ATCC BAA-1437 / JCM 17883 / MC-1).